We begin with the raw amino-acid sequence, 281 residues long: MFKRKKYVDNPYPKFVQPKNHKKRPAFIRYAMRCAAQTDVARNELYYTNPLKNPITGCVLHRKRRLNEHRARALRAVVQAMLYYFNIASMLVMASVEKLSDVCGLSTYSSAGNKSITRASRLITQFMEPMGLISCEKIWDKILGMYIPKIIYLKPLFFMLFDISKIRLKRVRIKQLEWINSQLKKKGEYPITLLEIEKQAKEKHIHSALLFRKSKYIIKKQKNKAKKFLELDEKYAKSYILNNLVKKYSTKELCKLGLTKLKRKVNCEYFRLKKLAQLPVV.

It belongs to the IncFII RepA family.

Its function is as follows. This protein is essential for plasmid replication; it is involved in copy control functions. In Buchnera aphidicola subsp. Cinara cedri (strain Cc), this protein is Probable replication-associated protein repA1 (repA1).